The following is a 229-amino-acid chain: Large ribosomal subunit protein bL25 (229 aa).

Disordered stretches follow at residues 1-21 (MDII…ASSR) and 182-229 (NAPE…KDKK). Residues 195–222 (PAAGAPAAGAAAAPAAGAAAPAKGAAPA) show a composition bias toward low complexity.

The protein belongs to the bacterial ribosomal protein bL25 family. CTC subfamily. Part of the 50S ribosomal subunit; part of the 5S rRNA/L5/L18/L25 subcomplex. Contacts the 5S rRNA. Binds to the 5S rRNA independently of L5 and L18.

Its function is as follows. This is one of the proteins that binds to the 5S RNA in the ribosome where it forms part of the central protuberance. This is Large ribosomal subunit protein bL25 from Sorangium cellulosum (strain So ce56) (Polyangium cellulosum (strain So ce56)).